Here is a 236-residue protein sequence, read N- to C-terminus: Small ribosomal subunit protein uS3 (236 aa).

One can recognise a KH type-2 domain in the interval 39 to 107 (IRLYVLEELK…ETSLNIVEIH (69 aa)). The disordered stretch occupies residues 216–236 (ERRAAEVDHSGSSSNRRRENA).

It belongs to the universal ribosomal protein uS3 family. Part of the 30S ribosomal subunit. Forms a tight complex with proteins S10 and S14.

In terms of biological role, binds the lower part of the 30S subunit head. Binds mRNA in the 70S ribosome, positioning it for translation. In Bartonella henselae (strain ATCC 49882 / DSM 28221 / CCUG 30454 / Houston 1) (Rochalimaea henselae), this protein is Small ribosomal subunit protein uS3.